A 48-amino-acid chain; its full sequence is NLVQFSNMIQCANHGSRPTRHYVDYGCYCGWGGSGTPVDELDRCCQTH.

Positions 28, 30, and 32 each coordinate Ca(2+). Cys29 and Cys45 are joined by a disulfide. The active site involves His48.

The cofactor is Ca(2+). Expressed by the venom gland.

It is found in the secreted. It catalyses the reaction a 1,2-diacyl-sn-glycero-3-phosphocholine + H2O = a 1-acyl-sn-glycero-3-phosphocholine + a fatty acid + H(+). Snake venom phospholipase A2 (PLA2) that inhibits collagen-induced platelet aggregation. In terms of inhibition of platelet aggregation, superbin d is less potent as superbin a, b, and c. PLA2 catalyzes the calcium-dependent hydrolysis of the 2-acyl groups in 3-sn-phosphoglycerides. The chain is Phospholipase A2 superbin d from Austrelaps superbus (Lowland copperhead snake).